The sequence spans 199 residues: Thymidylate kinase (199 aa).

7-14 (GTEGVGKT) contacts ATP.

The protein belongs to the thymidylate kinase family.

The enzyme catalyses dTMP + ATP = dTDP + ADP. Functionally, phosphorylation of dTMP to form dTDP in both de novo and salvage pathways of dTTP synthesis. The protein is Thymidylate kinase of Acinetobacter baumannii (strain AB307-0294).